The chain runs to 133 residues: Small ribosomal subunit protein uS8 (133 aa).

This sequence belongs to the universal ribosomal protein uS8 family. In terms of assembly, part of the 30S ribosomal subunit.

Its function is as follows. One of the primary rRNA binding proteins, it binds directly to 16S rRNA central domain where it helps coordinate assembly of the platform of the 30S subunit. This chain is Small ribosomal subunit protein uS8, found in Desulfurococcus amylolyticus (strain DSM 18924 / JCM 16383 / VKM B-2413 / 1221n) (Desulfurococcus kamchatkensis).